The sequence spans 101 residues: NADH-ubiquinone oxidoreductase chain 5 (101 aa).

Transmembrane regions (helical) follow at residues 12-32 (IALF…SGVI), 48-68 (FLFI…FICF), and 79-99 (LVIY…LFII).

It belongs to the complex I subunit 5 family.

It is found in the mitochondrion inner membrane. The enzyme catalyses a ubiquinone + NADH + 5 H(+)(in) = a ubiquinol + NAD(+) + 4 H(+)(out). Core subunit of the mitochondrial membrane respiratory chain NADH dehydrogenase (Complex I) that is believed to belong to the minimal assembly required for catalysis. Complex I functions in the transfer of electrons from NADH to the respiratory chain. The immediate electron acceptor for the enzyme is believed to be ubiquinone. This is NADH-ubiquinone oxidoreductase chain 5 (ND5) from Leishmania tarentolae (Sauroleishmania tarentolae).